Reading from the N-terminus, the 367-residue chain is Putative F-box/kelch-repeat protein At4g39600 (367 aa).

The F-box domain maps to 11-57; it reads ATSNPSLPEDLVVSCLARVSRLYYPTLSLVSKSFRSLIASPDLYKTR. 2 Kelch repeats span residues 127-171 and 172-216; these read HLYA…LDGK and MYLA…EGKI.

This Arabidopsis thaliana (Mouse-ear cress) protein is Putative F-box/kelch-repeat protein At4g39600.